The following is a 309-amino-acid chain: GDP-6-deoxy-D-mannose reductase (309 aa).

NADP(+) is bound by residues 11 to 12, Arg32, 47 to 48, and 71 to 73; these read FV, DI, and AKS. 114 to 115 provides a ligand contact to substrate; it reads SS. Residue Tyr140 participates in NADP(+) binding. Substrate contacts are provided by residues Asn169, Asp183, Arg209, and 269 to 272; that span reads RPSE.

This sequence belongs to the NAD(P)-dependent epimerase/dehydratase family. GDP-6-deoxy-D-mannose reductase subfamily.

The enzyme catalyses GDP-alpha-D-rhamnose + NAD(+) = GDP-4-dehydro-alpha-D-rhamnose + NADH + H(+). It catalyses the reaction GDP-alpha-D-rhamnose + NADP(+) = GDP-4-dehydro-alpha-D-rhamnose + NADPH + H(+). Functionally, reductase that catalyzes the conversion of GDP-6-deoxy-D-mannose to GDP-4-dehydro-6-deoxy-D-mannose (GDP-D-rhamnose). The polypeptide is GDP-6-deoxy-D-mannose reductase (rmd) (Aneurinibacillus thermoaerophilus).